Here is a 62-residue protein sequence, read N- to C-terminus: Large ribosomal subunit protein bL32 (62 aa).

Residues 1 to 16 show a composition bias toward basic residues; it reads MAVQKNRKTRSKRGMR. The tract at residues 1 to 62 is disordered; that stretch reads MAVQKNRKTR…VISQGDSDDE (62 aa). The segment covering 53 to 62 has biased composition (polar residues); that stretch reads VISQGDSDDE.

This sequence belongs to the bacterial ribosomal protein bL32 family.

The polypeptide is Large ribosomal subunit protein bL32 (Alcanivorax borkumensis (strain ATCC 700651 / DSM 11573 / NCIMB 13689 / SK2)).